The primary structure comprises 555 residues: Formate--tetrahydrofolate ligase (555 aa).

Residue 65–72 (TPAGEGKS) participates in ATP binding.

This sequence belongs to the formate--tetrahydrofolate ligase family.

The enzyme catalyses (6S)-5,6,7,8-tetrahydrofolate + formate + ATP = (6R)-10-formyltetrahydrofolate + ADP + phosphate. It participates in one-carbon metabolism; tetrahydrofolate interconversion. The polypeptide is Formate--tetrahydrofolate ligase (Staphylococcus aureus (strain COL)).